The primary structure comprises 401 residues: Tryptophan synthase beta chain (401 aa).

Lys92 carries the N6-(pyridoxal phosphate)lysine modification.

This sequence belongs to the TrpB family. As to quaternary structure, tetramer of two alpha and two beta chains. Pyridoxal 5'-phosphate serves as cofactor.

The enzyme catalyses (1S,2R)-1-C-(indol-3-yl)glycerol 3-phosphate + L-serine = D-glyceraldehyde 3-phosphate + L-tryptophan + H2O. It participates in amino-acid biosynthesis; L-tryptophan biosynthesis; L-tryptophan from chorismate: step 5/5. In terms of biological role, the beta subunit is responsible for the synthesis of L-tryptophan from indole and L-serine. The protein is Tryptophan synthase beta chain of Ruthia magnifica subsp. Calyptogena magnifica.